The chain runs to 722 residues: Nucleolar protein 10 (722 aa).

WD repeat units lie at residues Glu50–Glu90, Thr174–Ala213, Glu228–Val266, Tyr270–Ser308, and Glu310–Arg349. 2 coiled-coil regions span residues Glu423–Ala476 and Ser511–Glu534. Disordered stretches follow at residues Leu521–Gln555, Ser572–Tyr607, Arg616–Arg635, and Thr664–Phe722. Over residues Glu523 to Glu534 the composition is skewed to acidic residues. Basic and acidic residues predominate over residues Ser572–Thr586. Over residues Arg587–Gly600 the composition is skewed to polar residues. A coiled-coil region spans residues Asp620–Arg681. A compositionally biased stretch (basic and acidic residues) spans Thr664–Arg682. 2 stretches are compositionally biased toward basic residues: residues Arg683–Ser693 and Gly702–Phe722.

It belongs to the WD repeat NOL10/ENP2 family.

The protein localises to the nucleus. It localises to the nucleolus. The chain is Nucleolar protein 10 (nol10) from Danio rerio (Zebrafish).